Consider the following 229-residue polypeptide: Heptaprenylglyceryl phosphate synthase (229 aa).

Residue Lys-12 coordinates sn-glycerol 1-phosphate. Positions 14 and 40 each coordinate Mg(2+). Sn-glycerol 1-phosphate contacts are provided by residues 159–164 (YLEYSG), Gly-189, and 209–210 (GN).

Belongs to the GGGP/HepGP synthase family. Group I subfamily. In terms of assembly, homodimer. The cofactor is Mg(2+).

The catalysed reaction is sn-glycerol 1-phosphate + all-trans-heptaprenyl diphosphate = 3-heptaprenyl-sn-glycero-1-phosphate + diphosphate. The protein operates within membrane lipid metabolism; glycerophospholipid metabolism. Prenyltransferase that catalyzes in vivo the transfer of the heptaprenyl moiety of heptaprenyl pyrophosphate (HepPP; 35 carbon atoms) to the C3 hydroxyl of sn-glycerol-1-phosphate (G1P), producing heptaprenylglyceryl phosphate (HepGP). This reaction is an ether-bond-formation step in the biosynthesis of archaea-type G1P-based membrane lipids found in Bacillales. The chain is Heptaprenylglyceryl phosphate synthase from Bacillus thuringiensis (strain Al Hakam).